The following is a 159-amino-acid chain: Peptide deformylase (159 aa).

Fe cation contacts are provided by Cys-88 and His-130. Glu-131 is a catalytic residue. Residue His-134 participates in Fe cation binding.

The protein belongs to the polypeptide deformylase family. Fe(2+) is required as a cofactor.

The catalysed reaction is N-terminal N-formyl-L-methionyl-[peptide] + H2O = N-terminal L-methionyl-[peptide] + formate. Functionally, removes the formyl group from the N-terminal Met of newly synthesized proteins. Requires at least a dipeptide for an efficient rate of reaction. N-terminal L-methionine is a prerequisite for activity but the enzyme has broad specificity at other positions. This is Peptide deformylase from Thermoanaerobacter pseudethanolicus (strain ATCC 33223 / 39E) (Clostridium thermohydrosulfuricum).